The following is a 350-amino-acid chain: Pleckstrin (350 aa).

Positions 4-101 (KRIREGYLVK…WVRDIKKAIK (98 aa)) constitute a PH 1 domain. Lys-64 carries the post-translational modification N6-acetyllysine. Phosphoserine is present on residues Ser-113 and Ser-117. The region spanning 136–221 (PEKGIKELNL…SPDAFYYFPD (86 aa)) is the DEP domain. One can recognise a PH 2 domain in the interval 244-347 (VIIKQGCLLK…WIKAIQVASR (104 aa)).

Major protein kinase C substrate of platelets. In Mus musculus (Mouse), this protein is Pleckstrin (Plek).